Consider the following 73-residue polypeptide: uncharacterized protein (73 aa).

Post-translationally, N-glycosylated.

This is an uncharacterized protein from Saccharomyces cerevisiae (strain ATCC 204508 / S288c) (Baker's yeast).